We begin with the raw amino-acid sequence, 252 residues long: Body wall muscle protein HR-29 (252 aa).

Ser2 carries the post-translational modification N-acetylserine. A run of 3 repeats spans residues Arg37–Ser55, Gln56–Ser74, and Gln75–Ser93. A 3 X 19 AA approximate tandem repeats region spans residues Arg37–Ser93. The sHSP domain occupies Ile138–Glu249.

The protein belongs to the small heat shock protein (HSP20) family. Exists as an oligomer.

It is found in the membrane. Its function is as follows. May be a component of myofibrils where it acts as a stabilizer. In Halocynthia roretzi (Sea squirt), this protein is Body wall muscle protein HR-29.